We begin with the raw amino-acid sequence, 570 residues long: Urease subunit alpha (570 aa).

Positions 131–570 (GGFDAHIHFI…LPMAQRYFLF (440 aa)) constitute a Urease domain. The Ni(2+) site is built by His-136, His-138, and Lys-219. Lys-219 carries the post-translational modification N6-carboxylysine. His-221 is a substrate binding site. His-248 and His-274 together coordinate Ni(2+). His-322 serves as the catalytic Proton donor. A Ni(2+)-binding site is contributed by Asp-362.

It belongs to the metallo-dependent hydrolases superfamily. Urease alpha subunit family. In terms of assembly, heterotrimer of UreA (gamma), UreB (beta) and UreC (alpha) subunits. Three heterotrimers associate to form the active enzyme. It depends on Ni cation as a cofactor. Carboxylation allows a single lysine to coordinate two nickel ions.

It localises to the cytoplasm. The enzyme catalyses urea + 2 H2O + H(+) = hydrogencarbonate + 2 NH4(+). It participates in nitrogen metabolism; urea degradation; CO(2) and NH(3) from urea (urease route): step 1/1. This is Urease subunit alpha from Mesorhizobium japonicum (strain LMG 29417 / CECT 9101 / MAFF 303099) (Mesorhizobium loti (strain MAFF 303099)).